A 232-amino-acid chain; its full sequence is tRNA1(Val) (adenine(37)-N6)-methyltransferase (232 aa).

The protein belongs to the methyltransferase superfamily. tRNA (adenine-N(6)-)-methyltransferase family.

It localises to the cytoplasm. It carries out the reaction adenosine(37) in tRNA1(Val) + S-adenosyl-L-methionine = N(6)-methyladenosine(37) in tRNA1(Val) + S-adenosyl-L-homocysteine + H(+). Specifically methylates the adenine in position 37 of tRNA(1)(Val) (anticodon cmo5UAC). This is tRNA1(Val) (adenine(37)-N6)-methyltransferase from Haemophilus influenzae (strain ATCC 51907 / DSM 11121 / KW20 / Rd).